Here is a 175-residue protein sequence, read N- to C-terminus: Large ribosomal subunit protein uL10 (175 aa).

Belongs to the universal ribosomal protein uL10 family. As to quaternary structure, part of the ribosomal stalk of the 50S ribosomal subunit. The N-terminus interacts with L11 and the large rRNA to form the base of the stalk. The C-terminus forms an elongated spine to which L12 dimers bind in a sequential fashion forming a multimeric L10(L12)X complex.

Its function is as follows. Forms part of the ribosomal stalk, playing a central role in the interaction of the ribosome with GTP-bound translation factors. The sequence is that of Large ribosomal subunit protein uL10 from Picosynechococcus sp. (strain ATCC 27264 / PCC 7002 / PR-6) (Agmenellum quadruplicatum).